The sequence spans 458 residues: MEATGTDEVDKLKTKFISAWNNMKYSWVLKTKTYFSRNSPVLLLGKCYHFKYEDEDKTLPAESGCTIEDHVIAGNVEEFRKDFISRIWLTYREEFPQIEGSALTTDCGWGCTLRTGQMLLAQGLILHFLGRAWTWPDALNIENSDSESWTSHTVKKFTASFEASLSGEREFKTPTISLKETIGKYSDDHEMRNEVYHRKIISWFGDSPLALFGLHQLIEYGKKSGKKAGDWYGPAVVAHILRKAVEEARHPDLQGITIYVAQDCTVYNSDVIDKQSASMTSDNADDKAVIILVPVRLGGERTNTDYLEFVKGILSLEYCVGIIGGKPKQSYYFAGFQDDSLIYMDPHYCQSFVDVSIKDFPLETFHCPSPKKMSFRKMDPSCTIGFYCRNVQDFKRASEEITKMLKFSSKEKYPLFTFVNGHSRDYDFTSTTTNEEDLFSEDEKKQLKRFSTEEFVLL.

An N-acetylmethionine modification is found at Met1. The active-site Nucleophile is the Cys111. Residues Asp345 and His347 contribute to the active site. Phosphoserine is present on Ser451. Residue Thr452 is modified to Phosphothreonine.

It belongs to the peptidase C54 family.

The protein resides in the cytoplasm. It catalyses the reaction [protein]-C-terminal L-amino acid-glycyl-phosphatidylethanolamide + H2O = [protein]-C-terminal L-amino acid-glycine + a 1,2-diacyl-sn-glycero-3-phosphoethanolamine. Its activity is regulated as follows. Inhibited by N-ethylmaleimide. Cysteine protease that plays a key role in autophagy by mediating both proteolytic activation and delipidation of ATG8 family proteins. The protease activity is required for proteolytic activation of ATG8 family proteins: cleaves the C-terminal amino acid of ATG8 proteins MAP1LC3 and GABARAPL2, to reveal a C-terminal glycine. Exposure of the glycine at the C-terminus is essential for ATG8 proteins conjugation to phosphatidylethanolamine (PE) and insertion to membranes, which is necessary for autophagy. In addition to the protease activity, also mediates delipidation of ATG8 family proteins. Catalyzes delipidation of PE-conjugated forms of ATG8 proteins during macroautophagy. Compared to ATG4B, the major protein for proteolytic activation of ATG8 proteins, shows weaker ability to cleave the C-terminal amino acid of ATG8 proteins, while it displays stronger delipidation activity. In contrast to other members of the family, weakly or not involved in phagophore growth during mitophagy. In Homo sapiens (Human), this protein is Cysteine protease ATG4C.